A 165-amino-acid chain; its full sequence is (2E)-enoyl-[ACP] glycyltransferase (165 aa).

The protein belongs to the FcoT family.

The enzyme catalyses a (3R)-3-[(carboxymethyl)amino]fatty acid + holo-[ACP] + H(+) = a (2E)-enoyl-[ACP] + glycine + H2O. It carries out the reaction (3R)-3-[(carboxymethyl)amino]butanoate + holo-[ACP] + H(+) = (2E)-butenoyl-[ACP] + glycine + H2O. Its function is as follows. Involved in the biosynthesis of a unique class of isonitrile lipopeptides (INLPs). Catalyzes a Michael addition of glycine to the beta-position of an alpha,beta-unsaturated fatty acyl-[ACP], producing a (3R)-3-[(carboxymethyl)amino]fatty acid. Acts on the (2E)-butenoyl moiety loaded on the acyl-carrier protein ScoB, forming the product (3R)-3-[(carboxymethyl)amino]butanoate released from ScoB. In Streptomyces coeruleorubidus, this protein is (2E)-enoyl-[ACP] glycyltransferase.